The following is a 5005-amino-acid chain: Bridge-like lipid transfer protein family member 1 (5005 aa).

Residues 27–47 (VVWLLVATILSCGWIIYLTYY) traverse the membrane as a helical segment. Disordered stretches follow at residues 692–718 (RPAQKTSERVVSSPSMSPRPPVDPSEL) and 1205–1314 (KSVG…ASVC). The segment covering 708 to 718 (SPRPPVDPSEL) has biased composition (pro residues). The span at 1205–1215 (KSVGIEGERKT) shows a compositional bias: basic and acidic residues. Positions 1226-1240 (SHSSSSSSEENSSSS) are enriched in low complexity. Positions 1248–1275 (GEKESPSSAADDHSVQKDLLHSARRDDG) are enriched in basic and acidic residues. Polar residues predominate over residues 1278–1303 (SVPTEISGTSPVSPNTQDKSVGQSPL). Phosphoserine is present on residues Ser-1301, Ser-1305, and Ser-1323. At Thr-1325 the chain carries Phosphothreonine. 4 disordered regions span residues 1343–1376 (SDVSRSDENVLDSPKQRRSFGSFPYTPSADSNSF), 1399–1425 (EEFEPISSDEGPGTYPGRKKKKKQMQQ), 1521–1544 (TNKRTSKSSLHRPLDLDTPTSEES), and 1676–1698 (FSENLSPKQDIRGTKTEHPMIGT). 2 positions are modified to phosphoserine: Ser-1355 and Ser-1406. Residues 1521-1530 (TNKRTSKSSL) show a composition bias toward basic residues. Over residues 1684-1693 (QDIRGTKTEH) the composition is skewed to basic and acidic residues. Phosphoserine is present on residues Ser-1805 and Ser-1808. Disordered stretches follow at residues 1927-1991 (RGGV…PLMP), 2165-2192 (PAQPLKPPATVDQEHEEGLGLDNGGGLQ), 2265-2288 (TSGDTATDSPVHVGRAGMPVKESP), 2367-2387 (ESPVTKSGHNSLPTGVAPNLP), 2400-2420 (SSDQNTLDGTHSQHSTSQDDV), and 2598-2677 (TAGS…KDVV). Composition is skewed to polar residues over residues 1931 to 1948 (LTSNNSSDSPTGSGYNTD) and 1959 to 1971 (TSPSSDINGNSVS). Composition is skewed to polar residues over residues 2367–2379 (ESPVTKSGHNSLP), 2400–2418 (SSDQNTLDGTHSQHSTSQD), and 2598–2608 (TAGSASPTPTF). Ser-2601 and Ser-2603 each carry phosphoserine. Low complexity predominate over residues 2619 to 2638 (SDFSRSSRGSLNGGNRVNNA). The segment covering 2643–2665 (ANNENNKKESRNKNSLGRSERRT) has biased composition (basic and acidic residues). Residue Ser-2755 is modified to Phosphoserine. A disordered region spans residues 2928–2967 (RQPSTAPQPMKEDIATPLPSEKTPTSVNQTPIETNEFPQL). The span at 2949 to 2964 (KTPTSVNQTPIETNEF) shows a compositional bias: polar residues. Phosphoserine is present on residues Ser-3562, Glu-3577, and Ser-3653. 6 disordered regions span residues 3614–3662 (YSRS…TFNI), 3686–3744 (SSNS…ERFY), 3821–3843 (RRSYDRSSRSLDQDSPSKKKKFQ), 3935–3954 (KTNTLLPPQPPPIPSAKGKG), 4089–4145 (TTYP…SSSS), and 4325–4396 (QSAS…ASQQ). Over residues 3686–3711 (SSNSEGSCSVFSSPKTTGGFSPSVPF) the composition is skewed to polar residues. Residues 3727-3736 (EDSEKDEKDE) are compositionally biased toward acidic residues. Basic and acidic residues predominate over residues 3821–3837 (RRSYDRSSRSLDQDSPS). The span at 4097–4112 (SPGSNAPQTGAKTSAS) shows a compositional bias: polar residues. Low complexity predominate over residues 4117 to 4145 (PGSSGLGSPLGRSRHSSSQSDLTGSSSSS). A Phosphoserine modification is found at Ser-4124. Residues 4325-4358 (QSASFTHMPQSPNVFNEHMTNNTMSPGTAAQSLK) show a composition bias toward polar residues. Residues 4359 to 4372 (SPASIRSRSVSDSS) are compositionally biased toward low complexity. Positions 4381–4396 (KTSTPVNKSNKAASQQ) are enriched in polar residues.

In terms of tissue distribution, highly expressed in testis and ovary. Weakly or not expressed in other tissues.

The protein resides in the cell membrane. It localises to the endoplasmic reticulum membrane. Its subcellular location is the mitochondrion membrane. In terms of biological role, tube-forming lipid transport protein which provides phosphatidylethanolamine for glycosylphosphatidylinositol (GPI) anchor synthesis in the endoplasmic reticulum. Plays a role in endosomal trafficking and endosome recycling. Also involved in the actin cytoskeleton and cilia structural dynamics. Acts as a regulator of phagocytosis. The protein is Bridge-like lipid transfer protein family member 1 (Bltp1) of Mus musculus (Mouse).